An 806-amino-acid chain; its full sequence is MASGADSKGDDLSTAILKQKNRPNRLIVDEAINEDNSVVSLSQPKMDELQLFRGDTVLLKGKKRREAVCIVLSDDTCSDEKIRMNRVVRNNLRVRLGDVISIQPCPDVKYGKRIHVLPIDDTVEGITGNLFEVYLKPYFLEAYRPIRKGDIFLVRGGMRAVEFKVVETDPSPYCIVAPDTVIHCEGEPIKREDEEESLNEVGYDDIGGCRKQLAQIKEMVELPLRHPALFKAIGVKPPRGILLYGPPGTGKTLIARAVANETGAFFFLINGPEIMSKLAGESESNLRKAFEEAEKNAPAIIFIDELDAIAPKREKTHGEVERRIVSQLLTLMDGLKQRAHVIVMAATNRPNSIDPALRRFGRFDREVDIGIPDATGRLEILQIHTKNMKLADDVDLEQVANETHGHVGADLAALCSEAALQAIRKKMDLIDLEDETIDAEVMNSLAVTMDDFRWALSQSNPSALRETVVEVPQVTWEDIGGLEDVKRELQELVQYPVEHPDKFLKFGMTPSKGVLFYGPPGCGKTLLAKAIANECQANFISIKGPELLTMWFGESEANVREIFDKARQAAPCVLFFDELDSIAKARGGNIGDGGGAADRVINQILTEMDGMSTKKNVFIIGATNRPDIIDPAILRPGRLDQLIYIPLPDEKSRVAILKANLRKSPVAKDVDLEFLAKMTNGFSGADLTEICQRACKLAIRESIESEIRRERERQTNPSAMEVEEDDPVPEIRRDHFEEAMRFARRSVSDNDIRKYEMFAQTLQQSRGFGSFRFPSGNQGGAGPSQGSGGGTGGNVYTEDNDDDLYG.

Alanine 2 carries the N-acetylalanine modification. Residues serine 3 and serine 7 each carry the phosphoserine modification. Lysine 8 participates in a covalent cross-link: Glycyl lysine isopeptide (Lys-Gly) (interchain with G-Cter in SUMO2). Serine 13 bears the Phosphoserine mark. Lysine 18 is covalently cross-linked (Glycyl lysine isopeptide (Lys-Gly) (interchain with G-Cter in SUMO2)). Position 37 is a phosphoserine (serine 37). 247–253 (PGTGKTL) lines the ATP pocket. Lysine 315 carries the N6,N6,N6-trimethyllysine; by VCPKMT modification. Positions 348 and 384 each coordinate ATP. Threonine 436 is modified (phosphothreonine). Phosphoserine is present on serine 462. An N6-acetyllysine mark is found at lysine 502 and lysine 505. 521 to 526 (GCGKTL) contributes to the ATP binding site. Lysine 668 carries the N6-acetyllysine; alternate modification. Lysine 668 carries the N6-succinyllysine; alternate modification. At serine 702 the chain carries Phosphoserine. The interval 708–727 (RRERERQTNPSAMEVEEDDP) is disordered. The residue at position 754 (lysine 754) is an N6-acetyllysine. Positions 768–806 (FGSFRFPSGNQGGAGPSQGSGGGTGGNVYTEDNDDDLYG) are disordered. A phosphoserine mark is found at serine 770, serine 775, and serine 787. The segment covering 777 to 793 (NQGGAGPSQGSGGGTGG) has biased composition (gly residues). Residues 797-806 (TEDNDDDLYG) form an interaction with UBXN6 region. Positions 802 to 806 (DDLYG) match the PIM motif motif. Position 805 is a phosphotyrosine (tyrosine 805).

It belongs to the AAA ATPase family. As to quaternary structure, homohexamer. Forms a ring-shaped particle of 12.5 nm diameter, that displays 6-fold radial symmetry. Interacts with NSFL1C-like protein p37; the complex has membrane fusion activity and is required for Golgi and endoplasmic reticulum biogenesis. Interacts with RHBDD1 (via C-terminal domain). Interacts with SELENOS and SYVN1, as well as with DERL1 (via SHP-box motif), DERL2 and DERL3; which probably transfer misfolded proteins from the ER to VCP. Interacts with SVIP and DERL1. Component of a complex required to couple retrotranslocation, ubiquitination and deglycosylation composed of NGLY1, SAKS1, AMFR, VCP and RAD23B. Part of a complex composed of STUB1/CHIP, VCP/p97, CHRNA3, and UBXN2A that modulates the ubiquitination and endoplasmic reticulum-associated degradation (ERAD) of CHRNA3. Within the complex UBXN2A acts as a scaffold protein required for the interaction of CHRNA3 with VCP/p97, this interaction also inhibits CHRNA3 ubiquitination by STUB1/CHIP and subsequently ERAD. Interacts with UBXN2A (via UBX domain); the interaction is required for the interaction of CHRNA3 in the STUB1-VCP-UBXN2A complex. Directly interacts with UBXN4 and RNF19A. Interacts with CASR. Interacts with UBE4B and YOD1. Interacts with clathrin. Interacts with RNF103. Interacts with TRIM13 and TRIM21. Component of a VCP/p97-AMFR/gp78 complex that participates in the final step of the endoplasmic reticulum-associated degradation (ERAD) of HMGCR. Interacts directly with AMFR/gp78 (via its VIM). Interacts with SPRTN; leading to recruitment to stalled replication forks. Part of a ternary complex containing STX5A, NSFL1C and VCP. NSFL1C forms a homotrimer that binds to one end of a VCP homohexamer. The complex binds to membranes enriched in phosphatidylethanolamine-containing lipids and promotes Golgi membrane fusion. Binds to a heterodimer of NPLOC4 and UFD1, binding to this heterodimer inhibits Golgi-membrane fusion. Interaction with VCIP135 leads to dissociation of the complex via ATP hydrolysis by VCP. Part of a ternary complex containing NPLOC4, UFD1 and VCP. Interacts with WASHC5. Interacts with UBOX5. Interacts (via N-terminus) with UBXN7, UBXN8, and probably several other UBX domain-containing proteins (via UBX domains); the interactions are mutually exclusive with VIM-dependent interactions such as those with AMFR and SELENOS. Forms a complex with UBQLN1 and UBXN4. Interacts (via the PIM motif) with RNF31 (via the PUB domain). Interacts with RIGI and RNF125; interaction takes place when RIGI is ubiquitinated via 'Lys-63'-linked ubiquitin on its CARD domains, leading to recruit RNF125 and promote ubiquitination and degradation of RIGI. Interacts with BAG6. Interacts with UBXN10. Interacts with UBXN6; the interaction with UBXN6 is direct and competitive with UFD1. Forms a ternary complex with CAV1 and UBXN6. Interacts with PLAA, UBXN6 and YOD1; may form a complex involved in macroautophagy. Interacts with ANKZF1. Interacts with ubiquitin-binding protein FAF1. Interacts with ZFAND2B (via VIM motif); the interaction is direct. Interacts with ZFAND1 (via its ubiquitin-like region); this interaction occurs in an arsenite-dependent manner. Interacts with CCDC47. Interacts with LMBR1L and UBAC2. Interacts with ATXN3. Interacts with TEX264; bridging VCP to covalent DNA-protein cross-links (DPCs). Post-translationally, phosphorylated by tyrosine kinases in response to T-cell antigen receptor activation. Phosphorylated in mitotic cells. In terms of processing, ISGylated. Methylation at Lys-315 catalyzed by VCPKMT is increased in the presence of ASPSCR1. Lys-315 methylation may decrease ATPase activity.

The protein localises to the cytoplasm. It is found in the cytosol. Its subcellular location is the endoplasmic reticulum. The protein resides in the nucleus. It localises to the stress granule. It catalyses the reaction ATP + H2O = ADP + phosphate + H(+). In terms of biological role, necessary for the fragmentation of Golgi stacks during mitosis and for their reassembly after mitosis. Involved in the formation of the transitional endoplasmic reticulum (tER). The transfer of membranes from the endoplasmic reticulum to the Golgi apparatus occurs via 50-70 nm transition vesicles which derive from part-rough, part-smooth transitional elements of the endoplasmic reticulum (tER). Vesicle budding from the tER is an ATP-dependent process. The ternary complex containing UFD1, VCP and NPLOC4 binds ubiquitinated proteins and is necessary for the export of misfolded proteins from the ER to the cytoplasm, where they are degraded by the proteasome. The NPLOC4-UFD1-VCP complex regulates spindle disassembly at the end of mitosis and is necessary for the formation of a closed nuclear envelope. Regulates E3 ubiquitin-protein ligase activity of RNF19A. Component of the VCP/p97-AMFR/gp78 complex that participates in the final step of the sterol-mediated ubiquitination and endoplasmic reticulum-associated degradation (ERAD) of HMGCR. Mediates the endoplasmic reticulum-associated degradation of CHRNA3 in cortical neurons as part of the STUB1-VCP-UBXN2A complex. Involved in endoplasmic reticulum stress-induced pre-emptive quality control, a mechanism that selectively attenuates the translocation of newly synthesized proteins into the endoplasmic reticulum and reroutes them to the cytosol for proteasomal degradation. Involved in clearance process by mediating G3BP1 extraction from stress granules. Also involved in DNA damage response: recruited to double-strand breaks (DSBs) sites in a RNF8- and RNF168-dependent manner and promotes the recruitment of TP53BP1 at DNA damage sites. Recruited to stalled replication forks by SPRTN: may act by mediating extraction of DNA polymerase eta (POLH) to prevent excessive translesion DNA synthesis and limit the incidence of mutations induced by DNA damage. Together with SPRTN metalloprotease, involved in the repair of covalent DNA-protein cross-links (DPCs) during DNA synthesis. Involved in interstrand cross-link repair in response to replication stress by mediating unloading of the ubiquitinated CMG helicase complex. Mediates extraction of PARP1 trapped to chromatin: recognizes and binds ubiquitinated PARP1 and promotes its removal. Required for cytoplasmic retrotranslocation of stressed/damaged mitochondrial outer-membrane proteins and their subsequent proteasomal degradation. Essential for the maturation of ubiquitin-containing autophagosomes and the clearance of ubiquitinated protein by autophagy. Acts as a negative regulator of type I interferon production by interacting with RIGI: interaction takes place when RIGI is ubiquitinated via 'Lys-63'-linked ubiquitin on its CARD domains, leading to recruit RNF125 and promote ubiquitination and degradation of RIGI. May play a role in the ubiquitin-dependent sorting of membrane proteins to lysosomes where they undergo degradation. May more particularly play a role in caveolins sorting in cells. By controlling the steady-state expression of the IGF1R receptor, indirectly regulates the insulin-like growth factor receptor signaling pathway. The polypeptide is Transitional endoplasmic reticulum ATPase (Vcp) (Rattus norvegicus (Rat)).